The chain runs to 87 residues: Small ribosomal subunit protein bS21m (87 aa).

This sequence belongs to the bacterial ribosomal protein bS21 family. As to quaternary structure, component of the mitochondrial ribosome small subunit (28S) which comprises a 12S rRNA and about 30 distinct proteins.

The protein resides in the mitochondrion. The chain is Small ribosomal subunit protein bS21m (Mrps21) from Mus musculus (Mouse).